The sequence spans 188 residues: Gamma-glutamylcyclotransferase (188 aa).

19–22 (YFAY) lines the substrate pocket. Glu98 serves as the catalytic Proton acceptor. Ser173 is subject to Phosphoserine.

This sequence belongs to the gamma-glutamylcyclotransferase family. In terms of assembly, homodimer.

It catalyses the reaction an alpha-(gamma-L-glutamyl)-L-amino acid = 5-oxo-L-proline + an L-alpha-amino acid. Its function is as follows. Catalyzes the formation of 5-oxoproline from gamma-glutamyl dipeptides and may play a significant role in glutathione homeostasis. Induces release of cytochrome c from mitochondria with resultant induction of apoptosis. In Bos taurus (Bovine), this protein is Gamma-glutamylcyclotransferase (GGCT).